The following is a 496-amino-acid chain: Glutamyl-tRNA(Gln) amidotransferase subunit B, organellar chromatophore (496 aa).

It belongs to the GatB/GatE family. GatB subfamily. In terms of assembly, subunit of the heterotrimeric GatCAB amidotransferase (AdT) complex, composed of A, B and C subunits.

Its subcellular location is the plastid. It is found in the organellar chromatophore. It carries out the reaction L-glutamyl-tRNA(Gln) + L-glutamine + ATP + H2O = L-glutaminyl-tRNA(Gln) + L-glutamate + ADP + phosphate + H(+). Functionally, allows the formation of correctly charged Gln-tRNA(Gln) through the transamidation of misacylated Glu-tRNA(Gln). The reaction takes place in the presence of glutamine and ATP through an activated gamma-phospho-Glu-tRNA(Gln). This Paulinella chromatophora protein is Glutamyl-tRNA(Gln) amidotransferase subunit B, organellar chromatophore.